A 396-amino-acid polypeptide reads, in one-letter code: 1-deoxy-D-xylulose 5-phosphate reductoisomerase (396 aa).

6 residues coordinate NADPH: Thr-15, Gly-16, Ser-17, Ile-18, Gly-41, and Asn-129. Lys-130 contributes to the 1-deoxy-D-xylulose 5-phosphate binding site. Glu-131 is an NADPH binding site. Residue Asp-155 coordinates Mn(2+). Positions 156, 157, 182, and 205 each coordinate 1-deoxy-D-xylulose 5-phosphate. Glu-157 is a binding site for Mn(2+). Gly-211 lines the NADPH pocket. Residues Ser-218, Asn-223, Lys-224, and Glu-227 each contribute to the 1-deoxy-D-xylulose 5-phosphate site. Glu-227 is a binding site for Mn(2+).

It belongs to the DXR family. Requires Mg(2+) as cofactor. The cofactor is Mn(2+).

The catalysed reaction is 2-C-methyl-D-erythritol 4-phosphate + NADP(+) = 1-deoxy-D-xylulose 5-phosphate + NADPH + H(+). Its pathway is isoprenoid biosynthesis; isopentenyl diphosphate biosynthesis via DXP pathway; isopentenyl diphosphate from 1-deoxy-D-xylulose 5-phosphate: step 1/6. Catalyzes the NADPH-dependent rearrangement and reduction of 1-deoxy-D-xylulose-5-phosphate (DXP) to 2-C-methyl-D-erythritol 4-phosphate (MEP). The chain is 1-deoxy-D-xylulose 5-phosphate reductoisomerase from Xanthomonas euvesicatoria pv. vesicatoria (strain 85-10) (Xanthomonas campestris pv. vesicatoria).